Consider the following 429-residue polypeptide: MAEAAVASTVTLPVTGGWTKHVTCRYFMHGLCKEGDNCRYSHDLTSSKPAAMMCKFFQKGNCVFGERCRFEHCKPTKSEEVSNPQMLLLSSTPPPIDPECSESGPRLKTQDWANAAEFVPGQPYCGRAESVDVEISIPLIEELNGDATTDKEELRKQLCPYAAVGECRYGVNCAYLHGDVCDMCGLQVLHPTDSSQRSEHTKACIEAHEKDMEISFAIQRSKDMMCGVCMEVVFEKANPSERRFGILSNCSHCYCLKCIRKWRSAKQFESKIIKSCPECRITSNFVIPSEYWVEDKEDKQKLIQKYKDGMGRKPCRYFDEGRGICPFGANCFYKHAFPDGRLEEAQPQRRQTGSSSRNRNSRRTQLWDIIDERESTGSLDNDDEEMVTFELSEMLLMLLAAGNDEEVTDSEDEWDLFHEELDDFYEIYL.

C3H1-type zinc fingers lie at residues 18–45 (WTKH…HDLT), 48–75 (KPAA…HCKP), and 153–180 (ELRK…HGDV). Positions 181-208 (CDMCGLQVLHPTDSSQRSEHTKACIEAH) are makorin-type Cys-His. The RING-type zinc-finger motif lies at 226–280 (CGVCMEVVFEKANPSERRFGILSNCSHCYCLKCIRKWRSAKQFESKIIKSCPECR). The C3H1-type 4 zinc-finger motif lies at 309-338 (GMGRKPCRYFDEGRGICPFGANCFYKHAFP). The tract at residues 343 to 362 (EEAQPQRRQTGSSSRNRNSR) is disordered. Over residues 348-358 (QRRQTGSSSRN) the composition is skewed to low complexity.

It carries out the reaction S-ubiquitinyl-[E2 ubiquitin-conjugating enzyme]-L-cysteine + [acceptor protein]-L-lysine = [E2 ubiquitin-conjugating enzyme]-L-cysteine + N(6)-ubiquitinyl-[acceptor protein]-L-lysine.. Its pathway is protein modification; protein ubiquitination. Its function is as follows. E3 ubiquitin ligase catalyzing the covalent attachment of ubiquitin moieties onto substrate proteins. This is Probable E3 ubiquitin-protein ligase makorin-1 from Takifugu rubripes (Japanese pufferfish).